The chain runs to 283 residues: Protease HtpX homolog (283 aa).

A run of 2 helical transmembrane segments spans residues 7–27 and 29–49; these read TAVLMAAITALFMAIGSVLGG and QGMAIALVVALGMNFFSYWFS. H131 is a binding site for Zn(2+). Residue E132 is part of the active site. Residue H135 coordinates Zn(2+). 2 consecutive transmembrane segments (helical) span residues 146-166 and 177-197; these read ISATMAGAISMLANFAMFFGG and IAGILVMLLAPLAASLIQMAI. Position 202 (E202) interacts with Zn(2+).

This sequence belongs to the peptidase M48B family. Zn(2+) serves as cofactor.

The protein resides in the cell inner membrane. The sequence is that of Protease HtpX homolog from Methylibium petroleiphilum (strain ATCC BAA-1232 / LMG 22953 / PM1).